A 58-amino-acid chain; its full sequence is Large ribosomal subunit protein uL30 (58 aa).

This sequence belongs to the universal ribosomal protein uL30 family. As to quaternary structure, part of the 50S ribosomal subunit.

The chain is Large ribosomal subunit protein uL30 from Cytophaga hutchinsonii (strain ATCC 33406 / DSM 1761 / CIP 103989 / NBRC 15051 / NCIMB 9469 / D465).